Consider the following 230-residue polypeptide: Large ribosomal subunit protein uL1 (230 aa).

Belongs to the universal ribosomal protein uL1 family. As to quaternary structure, part of the 50S ribosomal subunit.

Binds directly to 23S rRNA. The L1 stalk is quite mobile in the ribosome, and is involved in E site tRNA release. Its function is as follows. Protein L1 is also a translational repressor protein, it controls the translation of the L11 operon by binding to its mRNA. In Sulfurimonas denitrificans (strain ATCC 33889 / DSM 1251) (Thiomicrospira denitrificans (strain ATCC 33889 / DSM 1251)), this protein is Large ribosomal subunit protein uL1.